A 356-amino-acid chain; its full sequence is Nicotinate-nucleotide--dimethylbenzimidazole phosphoribosyltransferase (356 aa).

Catalysis depends on Glu-317, which acts as the Proton acceptor.

Belongs to the CobT family. In terms of assembly, homodimer.

It carries out the reaction 5,6-dimethylbenzimidazole + nicotinate beta-D-ribonucleotide = alpha-ribazole 5'-phosphate + nicotinate + H(+). The protein operates within nucleoside biosynthesis; alpha-ribazole biosynthesis; alpha-ribazole from 5,6-dimethylbenzimidazole: step 1/2. In terms of biological role, catalyzes the synthesis of alpha-ribazole-5'-phosphate from nicotinate mononucleotide (NAMN) and 5,6-dimethylbenzimidazole (DMB). The polypeptide is Nicotinate-nucleotide--dimethylbenzimidazole phosphoribosyltransferase (Salmonella typhi).